The following is a 108-amino-acid chain: Probable chaperone-like protein YdbL (108 aa).

Positions 1 to 21 are cleaved as a signal peptide; sequence MKKTLLLCAFLVGLVSSNVMA.

Its subcellular location is the periplasm. Probably acts as a chaperone-like protein that contributes to, but is not required for, the formation of the YdbH-YnbE intermembrane bridge. Affects the function and the structure of the YdbH-YnbE complex. Overexpression of ydbL causes a negative effect on YdbH-YnbE function. The chain is Probable chaperone-like protein YdbL (ydbL) from Escherichia coli (strain K12).